We begin with the raw amino-acid sequence, 676 residues long: DNA ligase (676 aa).

Residues 1–10 (MTQAHHDDAG) are compositionally biased toward basic and acidic residues. The interval 1–23 (MTQAHHDDAGARNALQGGLATDP) is disordered. NAD(+) is bound by residues 52 to 56 (DAAFD) and 95 to 96 (SL). Residue Lys-148 is the N6-AMP-lysine intermediate of the active site. Positions 169, 203, and 330 each coordinate NAD(+). Residues Cys-420, Cys-423, Cys-436, and Cys-441 each coordinate Zn(2+). The region spanning 593 to 676 (EAEGPLAGLT…DKLIAERRGG (84 aa)) is the BRCT domain.

The protein belongs to the NAD-dependent DNA ligase family. LigA subfamily. Requires Mg(2+) as cofactor. It depends on Mn(2+) as a cofactor.

The enzyme catalyses NAD(+) + (deoxyribonucleotide)n-3'-hydroxyl + 5'-phospho-(deoxyribonucleotide)m = (deoxyribonucleotide)n+m + AMP + beta-nicotinamide D-nucleotide.. Its function is as follows. DNA ligase that catalyzes the formation of phosphodiester linkages between 5'-phosphoryl and 3'-hydroxyl groups in double-stranded DNA using NAD as a coenzyme and as the energy source for the reaction. It is essential for DNA replication and repair of damaged DNA. The polypeptide is DNA ligase (Sorangium cellulosum (strain So ce56) (Polyangium cellulosum (strain So ce56))).